The following is a 34-amino-acid chain: U10-ctenitoxin-Pr1a (34 aa).

4 disulfide bridges follow: cysteine 2-cysteine 15, cysteine 9-cysteine 20, cysteine 14-cysteine 31, and cysteine 22-cysteine 29.

As to expression, expressed by the venom gland.

It localises to the secreted. Non-toxic to mice and insects. The sequence is that of U10-ctenitoxin-Pr1a from Phoneutria reidyi (Brazilian Amazonian armed spider).